The following is a 181-amino-acid chain: MELIFLSIALAMDSVAISMANGARCMNIKALQIFKMSFLFGIFQAFMPVIGYFLGLAFVGFISYIDHYVAFAILLFLGIKMIKESRQISVHCSLNLSLRMLMLGAFATSLDALAVGITFSFEEINIAIAAFVIGLVCFVLCVIASYMGRVLGEMLESKALVLGGVILILIGCKIIITHLIN.

6 helical membrane-spanning segments follow: residues 3 to 23, 42 to 62, 63 to 83, 101 to 121, 124 to 144, and 160 to 180; these read LIFL…ANGA, IFQA…VGFI, SYID…KMIK, LMLG…TFSF, INIA…CVIA, and LVLG…THLI.

The protein belongs to the MntP (TC 9.B.29) family.

The protein resides in the cell inner membrane. Probably functions as a manganese efflux pump. This is Putative manganese efflux pump MntP from Campylobacter fetus subsp. fetus (strain 82-40).